The following is a 537-amino-acid chain: CTP synthase (537 aa).

An amidoligase domain region spans residues 1 to 267; it reads MAKFVFVTGG…ADIVLDKLGI (267 aa). Residue S13 coordinates CTP. S13 contacts UTP. 14–19 contacts ATP; that stretch reads SLGKGI. Y54 serves as a coordination point for L-glutamine. ATP is bound at residue D71. Mg(2+) contacts are provided by D71 and E141. Residues 148-150, 188-193, and K224 contribute to the CTP site; these read DIE and KTKPTQ. Residues 188–193 and K224 contribute to the UTP site; that span reads KTKPTQ. Residues 292-534 enclose the Glutamine amidotransferase type-1 domain; sequence TIALVGKYVS…IGAARKYKES (243 aa). G354 provides a ligand contact to L-glutamine. The active-site Nucleophile; for glutamine hydrolysis is the C381. L-glutamine contacts are provided by residues 382-385, E405, and R462; that span reads LGMQ. Active-site residues include H507 and E509.

Belongs to the CTP synthase family. As to quaternary structure, homotetramer.

It catalyses the reaction UTP + L-glutamine + ATP + H2O = CTP + L-glutamate + ADP + phosphate + 2 H(+). The enzyme catalyses L-glutamine + H2O = L-glutamate + NH4(+). It carries out the reaction UTP + NH4(+) + ATP = CTP + ADP + phosphate + 2 H(+). It functions in the pathway pyrimidine metabolism; CTP biosynthesis via de novo pathway; CTP from UDP: step 2/2. Its activity is regulated as follows. Allosterically activated by GTP, when glutamine is the substrate; GTP has no effect on the reaction when ammonia is the substrate. The allosteric effector GTP functions by stabilizing the protein conformation that binds the tetrahedral intermediate(s) formed during glutamine hydrolysis. Inhibited by the product CTP, via allosteric rather than competitive inhibition. Functionally, catalyzes the ATP-dependent amination of UTP to CTP with either L-glutamine or ammonia as the source of nitrogen. Regulates intracellular CTP levels through interactions with the four ribonucleotide triphosphates. The protein is CTP synthase of Pelotomaculum thermopropionicum (strain DSM 13744 / JCM 10971 / SI).